A 449-amino-acid polypeptide reads, in one-letter code: Asparagine--tRNA ligase (449 aa).

Belongs to the class-II aminoacyl-tRNA synthetase family. As to quaternary structure, homodimer.

Its subcellular location is the cytoplasm. The catalysed reaction is tRNA(Asn) + L-asparagine + ATP = L-asparaginyl-tRNA(Asn) + AMP + diphosphate + H(+). This is Asparagine--tRNA ligase from Mesomycoplasma hyopneumoniae (strain J / ATCC 25934 / NCTC 10110) (Mycoplasma hyopneumoniae).